Consider the following 996-residue polypeptide: MEPTEKPSTKPSSRTLPRDTRGSLEVFNPSTQLTRPDNPVFRPEPPAWQNLSDPRGTSPQPRPQQEPAPSNPVRSDQEIAVTTSWMALKDPSPETISKKTITAEKPQKSAVAAEQRAAEWGLVLKTDTKTGKPQGVGVRNSGGTENDPNGKKTTSQRNSQNSCRSSGEMSDGDVPGGRSGIPRVSEDLKDALSTFQQTFVVSDATKPDYPIMYASAGFFNMTGYTSKEVVGRNCRFLQGSGTDADELAKIRETLAAGNNYCGRILNYKKDGTSFWNLLTIAPIKDESGKVLKFIGMQVEVSKHTEGAKEKALRPNGLPESLIRYDARQKDMATNSVTELVEAVKRPRALSESTNLHPFMTKSESDELPKKPARRMSENVVPSGRRNSGGGRRNSMQRINEIPEKKSRKSSLSFMGIKKKSESLDESIDDGFIEYGEEDDEISDRDERPESVDDKVRQKEMRKGIDLATTLERIEKNFVITDPRLPDNPIIFASDSFLELTEYSREEILGRNCRFLQGPETDLTTVKKIRNAIDNQTEVTVQLINYTKSGKKFWNIFHLQPMRDQKGEVQYFIGVQLDGSKHVEPVRNVIEETAVKEGEDLVKKTAVNIDEAVRELPDANMTPEDLWANHSKVVHCKPHRKDSPPWIAIQKVLESGEPIGLKHFKPVKPLGSGDTGSVHLVELVGTDQLFAMKAMDKAVMLNRNKVHRARAEREILDLLDHPFLPALYASFQTKTHICLITDYYPGGELFMLLDRQPRKVLKEDAVRFYAAQVVVALEYLHCQGIIYRDLKPENVLIQGNGDISLSDFDLSCLTSCKPQLLIPSIDEKKKKKQQKSQQTPIFMAEPMRASNSFVGTEEYIAPEIISGAGHTSAVDWWALGILMYEMLYGYTPFRGKTRQKTFTNVLQKDLKFPASIPASLQVKQLIFRLLQRDPKKRLGCFEGANEVKQHSFFKGINWALIRCTNPPELETPIFSGEAENGEKVVDPELEDLQTNVF.

The tract at residues 1–184 is disordered; sequence MEPTEKPSTK…PGGRSGIPRV (184 aa). Ser23 and Ser58 each carry phosphoserine. Residues 49-59 are compositionally biased toward polar residues; the sequence is QNLSDPRGTSP. Pro residues predominate over residues 60-70; sequence QPRPQQEPAPS. Residues 141 to 153 are compositionally biased toward polar residues; sequence SGGTENDPNGKKT. The segment covering 155 to 166 has biased composition (low complexity); sequence SQRNSQNSCRSS. The region spanning 184–257 is the PAS 1 domain; sequence VSEDLKDALS…AKIRETLAAG (74 aa). Ser185 bears the Phosphoserine mark. Residue Asn233 coordinates FMN. Cys234 is modified (S-4a-FMN cysteine). Residues Arg235, Gln238, Arg251, Asn266, Asn276, Gln297, and Lys302 each coordinate FMN. Residues 258 to 312 form the PAC 1 domain; the sequence is NNYCGRILNYKKDGTSFWNLLTIAPIKDESGKVLKFIGMQVEVSKHTEGAKEKAL. Phosphoserine occurs at positions 350, 376, and 410. Disordered regions lie at residues 351 to 413 and 434 to 453; these read ESTN…SLSF and YGEE…SVDD. Residues 434-443 are compositionally biased toward acidic residues; it reads YGEEDDEISD. Over residues 444–453 the composition is skewed to basic and acidic residues; sequence RDERPESVDD. Residue Ser450 is modified to Phosphoserine. Residues 462–535 form the PAS 2 domain; the sequence is KGIDLATTLE…KKIRNAIDNQ (74 aa). Asn511 lines the FMN pocket. S-4a-FMN cysteine is present on Cys512. Residues Arg513, Gln516, Arg529, Asn544, Asn554, Phe556, and Gln575 each coordinate FMN. Residues 536 to 590 form the PAC 2 domain; it reads TEVTVQLINYTKSGKKFWNIFHLQPMRDQKGEVQYFIGVQLDGSKHVEPVRNVIE. Positions 663–952 constitute a Protein kinase domain; sequence FKPVKPLGSG…ANEVKQHSFF (290 aa). ATP-binding positions include 669–677 and Lys692; that span reads LGSGDTGSV. Asp788 (proton acceptor) is an active-site residue. The interval 806-862 is activation loop; the sequence is DFDLSCLTSCKPQLLIPSIDEKKKKKQQKSQQTPIFMAEPMRASNSFVGTEEYIAPE.

This sequence belongs to the protein kinase superfamily. AGC Ser/Thr protein kinase family. Homodimer; disulfide-linked. Interacts with PKS1, PKS2, RPT2, RPT3, PHOT2 and BLUS1. Subunit of a complex made of CAR6, PHOT1 and RPT3/NPH3. Associates with CBC1 and CBC2. Binds to BHP. The cofactor is FMN. Post-translationally, autophosphorylated at Ser-185, Ser-350 and Ser-410 in response to blue light irradiation. In terms of processing, 2 molecules of FMN bind covalently to cysteines after exposure to blue light and are reversed in the dark. In terms of tissue distribution, present in guard cells (at protein level).

Its subcellular location is the cell membrane. The protein localises to the cytoplasm. It carries out the reaction L-seryl-[protein] + ATP = O-phospho-L-seryl-[protein] + ADP + H(+). The enzyme catalyses L-threonyl-[protein] + ATP = O-phospho-L-threonyl-[protein] + ADP + H(+). Autophosphorylation is inhibited by staurosporine, but not by tyrphostin 9, sphingosine, GW5074 and BML-265. Functionally, protein kinase that acts as a blue light (BL) photoreceptor in a signal-transduction pathway for photo-induced movements. Triggers the phosphorylation of AHA1 and AHA2 C-terminal penultimate Thr in guard cells to activate them and induce stomatal opening in response to blue light (BL). Also phosphorylates BLUS1, a kinase involved in stomatal opening. Mediates the phosphorylation of CBC1 in stomata, but not of CBC2, in response to blue light. Required for blue light mediated mRNA destabilization. Mediates calcium spiking of extracellular origin in response to a low rate of blue light. Also mediates rapid membrane depolarization and growth inhibition in response to blue light. Necessary for root phototropism. Involved in hypocotyl phototropism under a low rate but not under a high rate of blue light. Contributes to the chloroplast accumulation but seems not to be required for chloroplast translocation. Regulates stomata opening and photomorphogenesis response of leaf tissue. Confers sensitivity to drought. Not involved in hypocotyl elongation inhibition, anthocyanin accumulation or cotyledon opening. Involved in the regulation of leaf position and morphology via the phosphorylation of ABCB19 during blue light responses to modulate auxin distribution. The protein is Phototropin-1 of Arabidopsis thaliana (Mouse-ear cress).